The primary structure comprises 353 residues: Photosystem II D2 protein (353 aa).

Residue Thr2 is modified to N-acetylthreonine. Thr2 carries the post-translational modification Phosphothreonine. Residues 41–61 (CAYFAVGGWFTGTTFVTSWYT) traverse the membrane as a helical segment. His118 lines the chlorophyll a pocket. Residues 125 to 141 (GFMLRQFELARSVQLRP) form a helical membrane-spanning segment. Gln130 and Asn143 together coordinate pheophytin a. The chain crosses the membrane as a helical span at residues 153 to 166 (VFVSVFLIYPLGQS). His198 is a binding site for chlorophyll a. A helical transmembrane segment spans residues 208-228 (AALLCAIHGATVENTLFEDGD). A plastoquinone-binding residues include His215 and Phe262. Residue His215 participates in Fe cation binding. His269 contributes to the Fe cation binding site. The helical transmembrane segment at 279–295 (GLWMSALGVVGLALNLR) threads the bilayer.

The protein belongs to the reaction center PufL/M/PsbA/D family. PSII is composed of 1 copy each of membrane proteins PsbA, PsbB, PsbC, PsbD, PsbE, PsbF, PsbH, PsbI, PsbJ, PsbK, PsbL, PsbM, PsbT, PsbX, PsbY, PsbZ, Psb30/Ycf12, at least 3 peripheral proteins of the oxygen-evolving complex and a large number of cofactors. It forms dimeric complexes. It depends on The D1/D2 heterodimer binds P680, chlorophylls that are the primary electron donor of PSII, and subsequent electron acceptors. It shares a non-heme iron and each subunit binds pheophytin, quinone, additional chlorophylls, carotenoids and lipids. There is also a Cl(-1) ion associated with D1 and D2, which is required for oxygen evolution. The PSII complex binds additional chlorophylls, carotenoids and specific lipids. as a cofactor.

It localises to the plastid. The protein localises to the chloroplast thylakoid membrane. The catalysed reaction is 2 a plastoquinone + 4 hnu + 2 H2O = 2 a plastoquinol + O2. Photosystem II (PSII) is a light-driven water:plastoquinone oxidoreductase that uses light energy to abstract electrons from H(2)O, generating O(2) and a proton gradient subsequently used for ATP formation. It consists of a core antenna complex that captures photons, and an electron transfer chain that converts photonic excitation into a charge separation. The D1/D2 (PsbA/PsbD) reaction center heterodimer binds P680, the primary electron donor of PSII as well as several subsequent electron acceptors. D2 is needed for assembly of a stable PSII complex. The chain is Photosystem II D2 protein from Cucumis sativus (Cucumber).